The chain runs to 634 residues: MAKVIGIDLGTTNSCVAVMEGDKVKVIENSEGKRTTPSIVAITEEGEVLVGEAAKRQAVTNPENTVYEVKRLIGRKFDDAEVQKDLKHVPYKVIKADNGDAWVEVRDKKYSAQQISAFILQKMKKTAEDYLGEKVTEAVITVPAYFNDAQRQATKDAGRIAGLEVKRIINEPTAAALAFGEDKKPGDSKIAVYDLGGGTFDISIIEIAEMEGEHQFEVLSTNGDTFLGGGDFDSRVINYLADSFKAESGIDLRGDRLAMQRLKEAAEKAKIELSSAQQTDVNLPFITADQSGPKHLNMKLTRAKLESLVEDLIDRSMAPCRVAMKDANLATSRITDVILVGGQSRMPKVQEKVKDFFGQDPRKDVNPDEAVAIGAAIQGAVLSGEKKDVLLMDVTPLSLGIETLGGVMTKLIEKNTTIPTRKSQIFSTAEDNQSAVTVHVLQGERELARDNKSLARFDLTDIANAPRGMPQIEVTFDIDANGILHVSAKDNQTGKEQSIKITASSGLSEEEIKRMIQEAEAHAADDKKARALIEARNEADASVHGARKAVEEHAAAPEHDKTKVTEAISAVENAAKGEDVEAIKGAVATLMAAMSALLQSAAAGQAQAESGAGAQGNAKPDDVVDAEFEEVDKK.

Thr-199 is subject to Phosphothreonine; by autocatalysis. A compositionally biased stretch (low complexity) spans 601–618 (AAAGQAQAESGAGAQGNA). A disordered region spans residues 601 to 634 (AAAGQAQAESGAGAQGNAKPDDVVDAEFEEVDKK). Residues 623–634 (VVDAEFEEVDKK) show a composition bias toward acidic residues.

Belongs to the heat shock protein 70 family.

Its function is as follows. Acts as a chaperone. This is Chaperone protein DnaK from Acidithiobacillus ferrooxidans (strain ATCC 23270 / DSM 14882 / CIP 104768 / NCIMB 8455) (Ferrobacillus ferrooxidans (strain ATCC 23270)).